The chain runs to 497 residues: MAKYIIALDQGTTSSRAIIFNHQGEVINISQKDFPQHFPQLGWVEHSPDAIWSTQLSVMQEAIAKARIREHDIAAIGITNQRETTMLWNRKTGEPVYQAIVWQDRRTARYCDTLKEEYGAMIRQKTGLIIDAYFSASKIHWILENVSGARELAEKGDLAFGTVDTWLIWCLTEGKVHVTDPSNASRTMLFNIHTMQWDDELLALFNIPKAILPEVKSSSEIYGYVDSRYIQGGKVPIAGIAGDQQAALFGQMCTKKGMMKNTYGTGCFLLMNTGDKIVTSNNNLLSTVAWKIGDKVTYALEGGVFVGGAVIQWVRDGLRIIRTADAINSLADTVEDNGGVYFVPCMTGMGAPYWDQYARGTIIGITRGTTDAHIARATLEGIALQVHDIVRAMEKDVGEATKEFRVDGGASASNLLMQIQSDIFQFDIVRPKVLETTALGAAYLAGLAIGFWQNTDEIAQQWQQDCTFSPKMPPEKVAHILRYWNKAVKAAQHWIEE.

Residue Thr12 coordinates ADP. Thr12, Thr13, and Ser14 together coordinate ATP. A sn-glycerol 3-phosphate-binding site is contributed by Thr12. Arg16 contacts ADP. Arg82, Glu83, Tyr133, and Asp243 together coordinate sn-glycerol 3-phosphate. 5 residues coordinate glycerol: Arg82, Glu83, Tyr133, Asp243, and Gln244. ADP contacts are provided by Thr265 and Gly308. ATP contacts are provided by Thr265, Gly308, Gln312, and Gly409. Gly409 serves as a coordination point for ADP.

This sequence belongs to the FGGY kinase family.

It catalyses the reaction glycerol + ATP = sn-glycerol 3-phosphate + ADP + H(+). Its pathway is polyol metabolism; glycerol degradation via glycerol kinase pathway; sn-glycerol 3-phosphate from glycerol: step 1/1. Inhibited by fructose 1,6-bisphosphate (FBP). Key enzyme in the regulation of glycerol uptake and metabolism. Catalyzes the phosphorylation of glycerol to yield sn-glycerol 3-phosphate. This is Glycerol kinase from Dichelobacter nodosus (strain VCS1703A).